The sequence spans 224 residues: Agamous-like MADS-box protein AGL9 homolog (224 aa).

In terms of domain architecture, MADS-box spans 3–57; sequence RGRVELKRIEGKINRQVTFAKRRNGLLKKAYELSVLCDAEVALIIFSNRGKLYEF. Residues 89–179 enclose the K-box domain; it reads EISSQQEYLK…KQRLMEGSQL (91 aa).

As to expression, flower specific.

It localises to the nucleus. Functionally, probable transcription factor active in inflorescence development and floral organogenesis. The protein is Agamous-like MADS-box protein AGL9 homolog (TDR5) of Solanum lycopersicum (Tomato).